The primary structure comprises 325 residues: Phosphatidylserine decarboxylase proenzyme (325 aa).

Catalysis depends on charge relay system; for autoendoproteolytic cleavage activity residues D90, H147, and S253. Catalysis depends on S253, which acts as the Schiff-base intermediate with substrate; via pyruvic acid; for decarboxylase activity. A Pyruvic acid (Ser); by autocatalysis modification is found at S253. A disordered region spans residues 281–325 (MASKMSSQKAITPEQTTETPVQASNEFDDNAGETKKDTPSEGADS). Residues 284 to 305 (KMSSQKAITPEQTTETPVQASN) are compositionally biased toward polar residues.

It belongs to the phosphatidylserine decarboxylase family. PSD-B subfamily. Prokaryotic type I sub-subfamily. Heterodimer of a large membrane-associated beta subunit and a small pyruvoyl-containing alpha subunit. The cofactor is pyruvate. Post-translationally, is synthesized initially as an inactive proenzyme. Formation of the active enzyme involves a self-maturation process in which the active site pyruvoyl group is generated from an internal serine residue via an autocatalytic post-translational modification. Two non-identical subunits are generated from the proenzyme in this reaction, and the pyruvate is formed at the N-terminus of the alpha chain, which is derived from the carboxyl end of the proenzyme. The autoendoproteolytic cleavage occurs by a canonical serine protease mechanism, in which the side chain hydroxyl group of the serine supplies its oxygen atom to form the C-terminus of the beta chain, while the remainder of the serine residue undergoes an oxidative deamination to produce ammonia and the pyruvoyl prosthetic group on the alpha chain. During this reaction, the Ser that is part of the protease active site of the proenzyme becomes the pyruvoyl prosthetic group, which constitutes an essential element of the active site of the mature decarboxylase.

It localises to the cell membrane. The catalysed reaction is a 1,2-diacyl-sn-glycero-3-phospho-L-serine + H(+) = a 1,2-diacyl-sn-glycero-3-phosphoethanolamine + CO2. It participates in phospholipid metabolism; phosphatidylethanolamine biosynthesis; phosphatidylethanolamine from CDP-diacylglycerol: step 2/2. Catalyzes the formation of phosphatidylethanolamine (PtdEtn) from phosphatidylserine (PtdSer). The chain is Phosphatidylserine decarboxylase proenzyme from Alteromonas mediterranea (strain DSM 17117 / CIP 110805 / LMG 28347 / Deep ecotype).